We begin with the raw amino-acid sequence, 625 residues long: tRNA uridine 5-carboxymethylaminomethyl modification enzyme MnmG (625 aa).

Position 11-16 (11-16 (GAGHAG)) interacts with FAD. NAD(+) is bound at residue 271–285 (GPRYCPSIETKIVTF).

This sequence belongs to the MnmG family. As to quaternary structure, homodimer. Heterotetramer of two MnmE and two MnmG subunits. FAD serves as cofactor.

It is found in the cytoplasm. NAD-binding protein involved in the addition of a carboxymethylaminomethyl (cmnm) group at the wobble position (U34) of certain tRNAs, forming tRNA-cmnm(5)s(2)U34. The polypeptide is tRNA uridine 5-carboxymethylaminomethyl modification enzyme MnmG (Porphyromonas gingivalis (strain ATCC BAA-308 / W83)).